Reading from the N-terminus, the 451-residue chain is Eukaryotic translation initiation factor 3 subunit E (451 aa).

The PCI domain occupies P245–S425.

The protein belongs to the eIF-3 subunit E family. In terms of assembly, component of the eukaryotic translation initiation factor 3 (eIF-3) complex.

The protein resides in the cytoplasm. Its function is as follows. Component of the eukaryotic translation initiation factor 3 (eIF-3) complex, which is involved in protein synthesis of a specialized repertoire of mRNAs and, together with other initiation factors, stimulates binding of mRNA and methionyl-tRNAi to the 40S ribosome. The eIF-3 complex specifically targets and initiates translation of a subset of mRNAs involved in cell proliferation. The chain is Eukaryotic translation initiation factor 3 subunit E (int6) from Sclerotinia sclerotiorum (strain ATCC 18683 / 1980 / Ss-1) (White mold).